Here is a 166-residue protein sequence, read N- to C-terminus: ATP synthase subunit b (166 aa).

Residues 15–37 traverse the membrane as a helical segment; the sequence is TLYYLLIFAALLLLVKHFAWGPV.

It belongs to the ATPase B chain family. In terms of assembly, F-type ATPases have 2 components, F(1) - the catalytic core - and F(0) - the membrane proton channel. F(1) has five subunits: alpha(3), beta(3), gamma(1), delta(1), epsilon(1). F(0) has three main subunits: a(1), b(2) and c(10-14). The alpha and beta chains form an alternating ring which encloses part of the gamma chain. F(1) is attached to F(0) by a central stalk formed by the gamma and epsilon chains, while a peripheral stalk is formed by the delta and b chains.

It localises to the cell membrane. F(1)F(0) ATP synthase produces ATP from ADP in the presence of a proton or sodium gradient. F-type ATPases consist of two structural domains, F(1) containing the extramembraneous catalytic core and F(0) containing the membrane proton channel, linked together by a central stalk and a peripheral stalk. During catalysis, ATP synthesis in the catalytic domain of F(1) is coupled via a rotary mechanism of the central stalk subunits to proton translocation. Its function is as follows. Component of the F(0) channel, it forms part of the peripheral stalk, linking F(1) to F(0). This is ATP synthase subunit b from Lactobacillus johnsonii (strain CNCM I-12250 / La1 / NCC 533).